The sequence spans 177 residues: ATP-dependent protease subunit HslV (177 aa).

Thr2 is an active-site residue. 3 residues coordinate Na(+): Gly157, Cys160, and Thr163.

It belongs to the peptidase T1B family. HslV subfamily. As to quaternary structure, a double ring-shaped homohexamer of HslV is capped on each side by a ring-shaped HslU homohexamer. The assembly of the HslU/HslV complex is dependent on binding of ATP.

The protein localises to the cytoplasm. The enzyme catalyses ATP-dependent cleavage of peptide bonds with broad specificity.. With respect to regulation, allosterically activated by HslU binding. In terms of biological role, protease subunit of a proteasome-like degradation complex believed to be a general protein degrading machinery. The sequence is that of ATP-dependent protease subunit HslV from Aeromonas salmonicida (strain A449).